We begin with the raw amino-acid sequence, 590 residues long: Muscarinic acetylcholine receptor M3 (590 aa).

Residues 1–67 (MTLHSNSTTS…DPLGGHTVWQ (67 aa)) are Extracellular-facing. N-linked (GlcNAc...) asparagine glycans are attached at residues Asn6, Asn15, Asn41, and Asn48. A helical transmembrane segment spans residues 68 to 91 (VVFIAFLTGILALVTIIGNILVIV). Topologically, residues 92 to 104 (SFKVNKQLKTVNN) are cytoplasmic. The helical transmembrane segment at 105 to 130 (YFLLSLACADLIIGVISMNLFTTYII) threads the bilayer. The Extracellular segment spans residues 131–142 (MNRWALGNLACD). Cys141 and Cys221 are disulfide-bonded. Residues 143-164 (LWLAIDYVASNASVMNLLVISF) traverse the membrane as a helical segment. At 165–184 (DRYFSITRPLTYRAKRTTKR) the chain is on the cytoplasmic side. A helical transmembrane segment spans residues 185–206 (AGVMIGLAWVISFVLWAPAILF). Residues 207 to 229 (WQYFVGKRTVPPGECFIQFLSEP) lie on the Extracellular side of the membrane. Residues 230–252 (TITFGTAIAAFYMPVTIMTILYW) form a helical membrane-spanning segment. The Cytoplasmic segment spans residues 253–491 (RIYKETEKRT…SLVKEKKAAQ (239 aa)). The Basolateral sorting signal signature appears at 275 to 281 (AETENFV). The segment at 323–357 (SSEQMDQDHSSSDSWNNNDAAASLENSASSDEEDI) is disordered. Positions 334-345 (SDSWNNNDAAAS) are enriched in low complexity. Residue Ser385 is modified to Phosphoserine. A helical transmembrane segment spans residues 492–514 (TLSAILLAFIITWTPYNIMVLVN). Residues 515 to 526 (TFCDSCIPKTFW) are Extracellular-facing. The cysteines at positions 517 and 520 are disulfide-linked. A helical transmembrane segment spans residues 527–546 (NLGYWLCYINSTVNPVCYAL). At 547 to 590 (CNKTFRTTFKMLLLCQCDKKKRRKQQYQQRQSVIFHKRAPEQAL) the chain is on the cytoplasmic side.

The protein belongs to the G-protein coupled receptor 1 family. Muscarinic acetylcholine receptor subfamily. CHRM3 sub-subfamily. Homodimer; the dimers can form tetramers. Interacts with NALCN. Interacts with TMEM147.

Its subcellular location is the cell membrane. It is found in the postsynaptic cell membrane. The protein resides in the basolateral cell membrane. The protein localises to the endoplasmic reticulum membrane. Its function is as follows. The muscarinic acetylcholine receptor mediates various cellular responses, including inhibition of adenylate cyclase, breakdown of phosphoinositides and modulation of potassium channels through the action of G proteins. Primary transducing effect is Pi turnover. This chain is Muscarinic acetylcholine receptor M3 (CHRM3), found in Pongo pygmaeus (Bornean orangutan).